The chain runs to 205 residues: Glutathione peroxidase 1 (205 aa).

S37 is modified (phosphoserine). Residue U52 is part of the active site. Residue U52 is a non-standard amino acid, selenocysteine. 2 positions are modified to N6-acetyllysine; alternate: K91 and K117. N6-succinyllysine; alternate is present on residues K91 and K117. Residue K117 is glycosylated (N-linked (Glc) (glycation) lysine; in vitro). Position 124 is an N6-acetyllysine (K124). Residue K151 is modified to N6-acetyllysine; alternate. N6-succinyllysine; alternate is present on K151. A phosphoserine mark is found at S200 and S204.

It belongs to the glutathione peroxidase family. Homotetramer. Interacts with MIEN1. Post-translationally, during periods of oxidative stress, Sec-52 may react with a superoxide radical, irreversibly lose hydroselenide and be converted to dehydroalanine.

The protein localises to the cytoplasm. It localises to the mitochondrion. The enzyme catalyses 2 glutathione + H2O2 = glutathione disulfide + 2 H2O. It catalyses the reaction a hydroperoxy polyunsaturated fatty acid + 2 glutathione = a hydroxy polyunsaturated fatty acid + glutathione disulfide + H2O. It carries out the reaction tert-butyl hydroperoxide + 2 glutathione = tert-butanol + glutathione disulfide + H2O. The catalysed reaction is cumene hydroperoxide + 2 glutathione = 2-phenylpropan-2-ol + glutathione disulfide + H2O. The enzyme catalyses (13S)-hydroperoxy-(9Z,11E)-octadecadienoate + 2 glutathione = (13S)-hydroxy-(9Z,11E)-octadecadienoate + glutathione disulfide + H2O. It catalyses the reaction (9S)-hydroperoxy-(10E,12Z)-octadecadienoate + 2 glutathione = (9S)-hydroxy-(10E,12Z)-octadecadienoate + glutathione disulfide + H2O. It carries out the reaction (5S)-hydroperoxy-(6E,8Z,11Z,14Z)-eicosatetraenoate + 2 glutathione = (5S)-hydroxy-(6E,8Z,11Z,14Z)-eicosatetraenoate + glutathione disulfide + H2O. The catalysed reaction is (12S)-hydroperoxy-(5Z,8Z,10E,14Z)-eicosatetraenoate + 2 glutathione = (12S)-hydroxy-(5Z,8Z,10E,14Z)-eicosatetraenoate + glutathione disulfide + H2O. The enzyme catalyses (12R)-hydroperoxy-(5Z,8Z,10E,14Z)-eicosatetraenoate + 2 glutathione = (12R)-hydroxy-(5Z,8Z,10E,14Z)-eicosatetraenoate + glutathione disulfide + H2O. It catalyses the reaction (15S)-hydroperoxy-(5Z,8Z,11Z,13E)-eicosatetraenoate + 2 glutathione = (15S)-hydroxy-(5Z,8Z,11Z,13E)-eicosatetraenoate + glutathione disulfide + H2O. It carries out the reaction (5S)-hydroperoxy-(6E,8Z,11Z,14Z,17Z)-eicosapentaenoate + 2 glutathione = (5S)-hydroxy-(6E,8Z,11Z,14Z,17Z)-eicosapentaenoate + glutathione disulfide + H2O. The catalysed reaction is (15S)-hydroperoxy-(5Z,8Z,11Z,13E,17Z)-eicosapentaenoate + 2 glutathione = (15S)-hydroxy-(5Z,8Z,11Z,13E,17Z)-eicosapentaenoate + glutathione disulfide + H2O. The enzyme catalyses (15S)-hydroperoxy-(11Z,13E)-eicosadienoate + 2 glutathione = (15S)-hydroxy-(11Z,13E)-eicosadienoate + glutathione disulfide + H2O. It catalyses the reaction (17S)-hydroperoxy-(4Z,7Z,10Z,13Z,15E,19Z)-docosahexaenoate + 2 glutathione = (17S)-hydroxy-(4Z,7Z,10Z,13Z,15E,19Z)-docosahexaenoate + glutathione disulfide + H2O. Its function is as follows. Catalyzes the reduction of hydroperoxides in a glutathione-dependent manner thus regulating cellular redox homeostasis. Can reduce small soluble hydroperoxides such as H2O2, cumene hydroperoxide and tert-butyl hydroperoxide, as well as several fatty acid-derived hydroperoxides. In platelets catalyzes the reduction of 12-hydroperoxyeicosatetraenoic acid, the primary product of the arachidonate 12-lipoxygenase pathway. This Bos taurus (Bovine) protein is Glutathione peroxidase 1 (GPX1).